A 410-amino-acid chain; its full sequence is Probable intron-encoded endonuclease bI1 (410 aa).

The interval 1-131 (MRLLKTHPIL…VLMMAIAFLG (131 aa)) is COB exon 1 encoded. Helical transmembrane passes span 32–52 (FGSL…FLAM), 75–95 (GWLI…FVYL), and 112–132 (LLWS…FLGF). The segment at 132 to 410 (FNGQKYMCFY…KKNYIVKVIK (279 aa)) is COB intron 1 encoded. The GIY-YIG domain occupies 196–286 (PFSGIYMIVN…LETLKPEYNI (91 aa)).

The protein to endonucleases of group I introns of fungi and phage. In terms of processing, the mature protein may arise from proteolytic cleavage of an in-frame translation of COB exon 1 plus intron 1, containing the bI1 open reading frame.

The protein localises to the mitochondrion. It localises to the membrane. In terms of biological role, mitochondrial DNA endonuclease involved in intron homing. The protein is Probable intron-encoded endonuclease bI1 (bI1) of Mycosarcoma maydis (Corn smut fungus).